Here is a 680-residue protein sequence, read N- to C-terminus: Tumor protein 63 (680 aa).

The segment at methionine 1–methionine 107 is transcription activation. Over residues glutamine 122–aspartate 157 the composition is skewed to polar residues. The interval glutamine 122–tyrosine 171 is disordered. Residues aspartate 170 to glutamine 362 mediate DNA binding. Positions 244, 247, 308, and 312 each coordinate Zn(2+). The span at aspartate 351–arginine 360 shows a compositional bias: basic and acidic residues. Disordered stretches follow at residues aspartate 351–arginine 393 and arginine 436–methionine 472. The interval arginine 352 to threonine 388 is interaction with HIPK2. Over residues arginine 379–serine 389 the composition is skewed to polar residues. The segment at arginine 394–histidine 443 is oligomerization. Residues glutamine 437–serine 463 are compositionally biased toward low complexity. The SAM domain maps to proline 541 to leucine 607. Positions phenylalanine 610–glutamate 680 are transactivation inhibition. A Glycyl lysine isopeptide (Lys-Gly) (interchain with G-Cter in SUMO) cross-link involves residue lysine 676.

This sequence belongs to the p53 family. In terms of assembly, binds DNA as a homotetramer. Isoform composition of the tetramer may determine transactivation activity. Interacts with HIPK2. Interacts with SSRP1, leading to stimulate coactivator activity. Interacts with WWP1. Interacts with PDS5A. Interacts (via activation domain) with NOC2L. Zn(2+) is required as a cofactor. Post-translationally, may be sumoylated. Ubiquitinated. Polyubiquitination involves WWP1 and leads to proteasomal degradation of this protein. As to expression, widely expressed, notably in thymus, prostate, placenta, and skeletal muscle, although the precise isoform varies according to tissue type. Progenitor cell layers of skin, breast and prostate express high levels of DeltaN-type isoforms.

It is found in the nucleus. In terms of biological role, acts as a sequence specific DNA binding transcriptional activator or repressor. The isoforms contain a varying set of transactivation and auto-regulating transactivation inhibiting domains thus showing an isoform specific activity. May be required in conjunction with TP73/p73 for initiation of p53/TP53 dependent apoptosis in response to genotoxic insults and the presence of activated oncogenes. Involved in Notch signaling by probably inducing JAG1 and JAG2. Activates RIPK4 transcription. Plays a role in the regulation of epithelial morphogenesis. The ratio of DeltaN-type and TA*-type isoforms may govern the maintenance of epithelial stem cell compartments and regulate the initiation of epithelial stratification from the undifferentiated embryonal ectoderm. Required for limb formation from the apical ectodermal ridge. Activates transcription of the p21 promoter. This Rattus norvegicus (Rat) protein is Tumor protein 63 (Tp63).